Reading from the N-terminus, the 157-residue chain is Transcription elongation factor GreA (157 aa).

The interval 1 to 60 (MEKVPMTSAGFAALGEELKKRQSEDRPRIIEHIAEARSHGDLSENAEYHAAKEEQSHNEG) is disordered. Over residues 16-60 (EELKKRQSEDRPRIIEHIAEARSHGDLSENAEYHAAKEEQSHNEG) the composition is skewed to basic and acidic residues. A coiled-coil region spans residues 46 to 73 (AEYHAAKEEQSHNEGRIAELEDKLARAD).

It belongs to the GreA/GreB family.

In terms of biological role, necessary for efficient RNA polymerase transcription elongation past template-encoded arresting sites. The arresting sites in DNA have the property of trapping a certain fraction of elongating RNA polymerases that pass through, resulting in locked ternary complexes. Cleavage of the nascent transcript by cleavage factors such as GreA or GreB allows the resumption of elongation from the new 3'terminus. GreA releases sequences of 2 to 3 nucleotides. In Bradyrhizobium diazoefficiens (strain JCM 10833 / BCRC 13528 / IAM 13628 / NBRC 14792 / USDA 110), this protein is Transcription elongation factor GreA.